The sequence spans 261 residues: uncharacterized protein (261 aa).

This is an uncharacterized protein from Methanocaldococcus jannaschii (strain ATCC 43067 / DSM 2661 / JAL-1 / JCM 10045 / NBRC 100440) (Methanococcus jannaschii).